A 100-amino-acid polypeptide reads, in one-letter code: uncharacterized protein (100 aa).

In terms of domain architecture, HTH arsR-type spans 1 to 100 (MEPIEVFKAL…KLADFLKTEI (100 aa)). The H-T-H motif DNA-binding region spans 44-67 (VSQITDKLKMTQSTASQYLTILLR).

This is an uncharacterized protein from Bacillus subtilis (strain 168).